A 495-amino-acid chain; its full sequence is MEPFTTFSLVASSLILLICWALVKANKPAKNLPPGPPKLPIIGNMHQLESQSPHRVLRKLSRKYGPIMHLQLGQVPTVVISTPRLVEEVVKHHDINFADRPTNTTSQIFYYNNQNVAWSSYGNYWRQIKKIVTLELLSVKKVRSFSSIRAEELTRAVKSVEPSVGSTINFRDLTSQTVNNMVSRATLGDVCKERHILLDTMNDILKTFNSFNVVNFFPSLQFLNVITGKKAKWLKIHKQLDHILENILEEHKSKPKGNQDDEDLIDVLLRVKDAGGQELPITNDNVKAITLEMLTAGTSSSSMTIEWAFCELMRHPEVMKKVQSDVRSAVKGNKVTEDDIQNMHYLKLVVKETLRLHGVPILVPRQNREDCNVLGYHIPAKTKILINAWACGTDPDTWEDPESFIPERFEKSSVSYFGTDFQLIPFGTGRRICPGVNFGIGTVEAVLSNFLYHFDWKLPDGVKPQDIDMTEVTGISTLPKYPLHIVPVSTVSQQK.

A helical; Signal-anchor for type II membrane protein transmembrane segment spans residues 3-23 (PFTTFSLVASSLILLICWALV). N-linked (GlcNAc...) asparagine glycosylation occurs at Asn103. Cys433 serves as a coordination point for heme.

The protein belongs to the cytochrome P450 family. The cofactor is heme. As to expression, mostly expressed in leaves and flowers, and, to a lower extent, in roots and stems.

The protein resides in the membrane. It carries out the reaction germacra-1(10),4,11(13)-trien-12-oate + reduced [NADPH--hemoprotein reductase] + O2 = 8beta-hydroxygermacra-1(10),4,11(13)-trien-12-oate + oxidized [NADPH--hemoprotein reductase] + H2O + H(+). The catalysed reaction is germacra-1(10),4,11(13)-trien-12-oate + reduced [NADPH--hemoprotein reductase] + O2 = 8-epi-inunolide + oxidized [NADPH--hemoprotein reductase] + 2 H2O. The enzyme catalyses germacra-1(10),4,11(13)-trien-12-oate + reduced [NADPH--hemoprotein reductase] + O2 = 8alpha-hydroxygermacra-1(10),4,11(13)-trien-12-oate + oxidized [NADPH--hemoprotein reductase] + H2O + H(+). It functions in the pathway secondary metabolite biosynthesis; terpenoid biosynthesis. Functionally, involved in the biosynthesis of germacrene-derived sesquiterpene lactones. Hydroxylates germacrene A acid to 8-beta-hydroxy-germacrene A and 8-alpha-hydroxy-germacrene A acids. Unlike 8-alpha-hydroxy-germacrene A acid with is spontaneously converted into inunolide (12, 8-alpha), 8-beta-hydroxy-germacrene A cannot undergo spontaneous lactonization. The polypeptide is Germacrene A acid 8-beta-hydroxylase (Inula hupehensis (Inula helianthus-aquatilis subsp. hupehensis)).